The primary structure comprises 433 residues: Pectinesterase B (433 aa).

The N-terminal stretch at 1–21 (MSLTHYSGLAAAVSMSLILTA) is a signal peptide. The N-palmitoyl cysteine moiety is linked to residue cysteine 22. Cysteine 22 is lipidated: S-diacylglycerol cysteine. Topologically, residues 22 to 433 (CGGQTPNSAR…EYNTQVLLHE (412 aa)) are periplasmic. Substrate-binding residues include threonine 202 and glutamine 236. Aspartate 259 functions as the Proton donor in the catalytic mechanism. Aspartate 292 (nucleophile) is an active-site residue. Substrate is bound by residues arginine 356 and tryptophan 358.

This sequence belongs to the pectinesterase family.

The protein localises to the cell outer membrane. It catalyses the reaction [(1-&gt;4)-alpha-D-galacturonosyl methyl ester](n) + n H2O = [(1-&gt;4)-alpha-D-galacturonosyl](n) + n methanol + n H(+). The protein operates within glycan metabolism; pectin degradation; 2-dehydro-3-deoxy-D-gluconate from pectin: step 1/5. Probably involved in the degradation of methylated oligogalacturonides present in the periplasm. More active on methylated oligogalacturides than on pectin. This chain is Pectinesterase B, found in Dickeya dadantii (strain 3937) (Erwinia chrysanthemi (strain 3937)).